Consider the following 334-residue polypeptide: tRNA N6-adenosine threonylcarbamoyltransferase (334 aa).

Histidine 111 and histidine 115 together coordinate Fe cation. Residues 134 to 138 (IVSGG), aspartate 167, glycine 180, aspartate 184, and asparagine 272 each bind substrate. Aspartate 300 contributes to the Fe cation binding site.

This sequence belongs to the KAE1 / TsaD family. It depends on Fe(2+) as a cofactor.

It is found in the cytoplasm. The enzyme catalyses L-threonylcarbamoyladenylate + adenosine(37) in tRNA = N(6)-L-threonylcarbamoyladenosine(37) in tRNA + AMP + H(+). In terms of biological role, required for the formation of a threonylcarbamoyl group on adenosine at position 37 (t(6)A37) in tRNAs that read codons beginning with adenine. Is involved in the transfer of the threonylcarbamoyl moiety of threonylcarbamoyl-AMP (TC-AMP) to the N6 group of A37, together with TsaE and TsaB. TsaD likely plays a direct catalytic role in this reaction. The sequence is that of tRNA N6-adenosine threonylcarbamoyltransferase from Dictyoglomus turgidum (strain DSM 6724 / Z-1310).